We begin with the raw amino-acid sequence, 102 residues long: Large ribosomal subunit protein bL21 (102 aa).

Belongs to the bacterial ribosomal protein bL21 family. As to quaternary structure, part of the 50S ribosomal subunit. Contacts protein L20.

Functionally, this protein binds to 23S rRNA in the presence of protein L20. This is Large ribosomal subunit protein bL21 from Leifsonia xyli subsp. xyli (strain CTCB07).